The primary structure comprises 452 residues: MALQTLQSSWVTFRKILSHFPEELSLAFVYGSGVYRQAGPSSDQKNAMLDFVFTVDDPVAWHSKNLKKNWSHYSFLKVLGPKIITSIQNNYGAGVYYNSLIMCNGRLIKYGVISTNVLIEDLLNWNNLYIAGRLQKPVKIISVNEDVTLRSALDRNLKSAVTAAFLMLPESFSEEDLFIEIAGLSYSGDFRMVVGEDKTKVLNIVKPNIAHFRELYGSILQENPQVVYKSQQGWLEIDKSPEGQFTQLMTLPKTLQQQINHIMDPPGKNRDVEETLFQVAHDPDCGDVVRLGLSAIVRPSSIRQSTKGIFTAGKSFGNPCVTYLLTEWLPHSWLQCKALYLLGACEMLSFDGHKLGYCSKVQTGITAAEPGGRTMSDHWQCCWKLYCPSEFSETLPVCRVFPSYCFIYQSYRCIGLQKQQHLCSPSSSPSLRQLLPSVLVGYFCCYCHFSKW.

The protein belongs to the TAM41 family. It depends on Mg(2+) as a cofactor.

It is found in the mitochondrion inner membrane. The enzyme catalyses a 1,2-diacyl-sn-glycero-3-phosphate + CTP + H(+) = a CDP-1,2-diacyl-sn-glycerol + diphosphate. Its pathway is phospholipid metabolism; CDP-diacylglycerol biosynthesis; CDP-diacylglycerol from sn-glycerol 3-phosphate: step 3/3. In terms of biological role, catalyzes the conversion of phosphatidic acid (PA) to CDP-diacylglycerol (CDP-DAG), an essential intermediate in the synthesis of phosphatidylglycerol, cardiolipin and phosphatidylinositol. This Homo sapiens (Human) protein is Phosphatidate cytidylyltransferase, mitochondrial (TAMM41).